The chain runs to 669 residues: PAN2-PAN3 deadenylation complex subunit PAN3 (669 aa).

Positions 1 to 10 are enriched in polar residues; sequence MATTFGSPSG. Residues 1–25 are disordered; the sequence is MATTFGSPSGDSRRGVASPRPKGRE. Residues 25–54 form a C3H1-type zinc finger; that stretch reads EAKNTFCRNVTIYGHCRYENSKCRPPHLPD. Residues 247–519 form a pseudokinase domain region; sequence QVMPNSTLPV…DIDNFLGGIS (273 aa). Residues Arg-298, 347-354, and 408-409 contribute to the ATP site; these read DYHPNSKS and SK. The stretch at 520-558 forms a coiled coil; the sequence is DQLASVFDSELHAQDTLTNTLGRELESSRIVRLLVKLNM. Positions 559-669 are knob domain; that stretch reads VNERPELDAS…LIRAGRGQGK (111 aa).

The protein belongs to the protein kinase superfamily. PAN3 family. In terms of assembly, homodimer. Forms a heterotrimer with a catalytic subunit PAN2 to form the poly(A)-nuclease (PAN) deadenylation complex. Interacts (via PAM-2 motif) with poly(A)-binding protein PAB1 (via PABC domain), conferring substrate specificity of the enzyme complex.

Its subcellular location is the cytoplasm. Functionally, regulatory subunit of the poly(A)-nuclease (PAN) deadenylation complex, one of two cytoplasmic mRNA deadenylases involved in mRNA turnover. PAN specifically shortens poly(A) tails of RNA and the activity is stimulated by poly(A)-binding protein PAB1. PAN deadenylation is followed by rapid degradation of the shortened mRNA tails by the CCR4-NOT complex. Deadenylated mRNAs are then degraded by two alternative mechanisms, namely exosome-mediated 3'-5' exonucleolytic degradation, or deadenylation-dependent mRNA decaping and subsequent 5'-3' exonucleolytic degradation by XRN1. May also be involved in post-transcriptional maturation of mRNA poly(A) tails. PAN3 acts as a positive regulator for PAN activity, recruiting the catalytic subunit PAN2 to mRNA via its interaction with RNA and with PAB1. The chain is PAN2-PAN3 deadenylation complex subunit PAN3 from Phaeosphaeria nodorum (strain SN15 / ATCC MYA-4574 / FGSC 10173) (Glume blotch fungus).